The primary structure comprises 327 residues: Polyprenyl transferase esdpC (327 aa).

8 consecutive transmembrane segments (helical) span residues 35–54 (YNPLLATFSGVWATLLAGAS), 73–93 (LLVFVGGYIFCGAGMVWNDWI), 118–138 (EALIWMMAQYIASWYLIAYTL), 140–160 (GHNVLEAMIPVTISTILYPFG), 171–191 (YPQYFLGFTLGYPSVIGWLAI), 202–222 (IMESFALGTTVFTWVLYLNTA), 239–259 (VYFLAGSYIHYFLVFLAALVL), and 307–327 (ENFALGVWTVFACAVELLLKS).

This sequence belongs to the UbiA prenyltransferase family. It depends on Mg(2+) as a cofactor.

The protein localises to the membrane. Its pathway is secondary metabolite biosynthesis; terpenoid biosynthesis. Its function is as follows. olyprenyl transferase; part of the cluster that mediates the biosynthesis of shearones, diterpenoid pyrones (DPs) which are structurally diverse meroterpenoids consisting of a diterpene linked by a pyrone, and which may exhibit a range of bioactivities. Within the pathway, esdpC takes part to the biosynthesis of the molecular scaffold by catalyzing the C-3 geranylgeranylation reaction of the alpha-pyrone produced by esdpA. The molecular scaffold is commonly biosynthesized by a series of enzymes including the non-reducing polyketide synthase (NR-PKS) esdpA that generates an alpha-pyrone; the prenyltransferase esdpC that attaches a geranylgeranyl pyrophosphate (GGPP) produced by the GGPP synthase (GGPPS) esdpD onto the pyrone unit; the FAD-dependent monooxygenase esdpE that converts an olefin on the diterpene unit into an epoxide; and the terpene cyclase esdpB that catalyzes the cyclization reactions to give the molecular backbone shearone A. In the modification steps, esdpF oxidizes the hydroxy group to a ketone at C-3 and esdpG then attaches hydroxy groups at both C-11 and C-12. After that, esdpI hydroxylates at C-20 and esdpH hydroxylates at C-6'. The ether bridge is generated by nucleophilic attack of the hydroxy group at C-20 to the carbonyl carbon at C-3. EsdpH can also functions prior to esdpI. The different combinations of these modification enzymes lead to the production of diverse shearone derivatives, shearone I being the end product of the pathway. The alpha-ketoglutarate-dependent dioxygenase esdpJ seems not to be involved in this pathway. In Penicillium shearii (Eupenicillium shearii), this protein is Polyprenyl transferase esdpC.